The following is a 404-amino-acid chain: FPYQGSSIMLESGKVNDYEVVYPQRLAPLPEGAVQQKYEDTMQYEFKVNGETIGLHMEKSKGLFSKDYSETHYSPDGRKITTYPSVEDHCYYHGRIENYEDSTASISACNGLKGHFKIQGETYFIESLKLSDSEAHAVFKYENVEKEDETHKMCGVTQNWKSYDPIKKPSWVNLTPKQQTWPQTSVNLQLVVDRSMYAKYNSDSEKITQTLQERVNIMKEIFKPLNLDITLSVIEMWDKKDLITVKTAATDTLKLFPKWRQTDLLKRIDNDNAQLQTAVDFDGETVGLAFKGTMCDKRYSAGIIQDHSAIPLLMAVTMAHELGHNLGMDHDDTYKCNCNVCIMPPRLNTNPSKTFSDCSNNDYQKFLTDKKPKCIHKKSLKTDTVSTSVSGNEPLDDNVDGFHA.

A signal peptide spans 1–6; sequence FPYQGS. A propeptide spanning residues 7–177 is cleaved from the precursor; that stretch reads SIMLESGKVN…KPSWVNLTPK (171 aa). Positions 184 to 379 constitute a Peptidase M12B domain; that stretch reads TSVNLQLVVD…KKPKCIHKKS (196 aa). Disulfide bonds link cysteine 295-cysteine 374, cysteine 336-cysteine 358, and cysteine 338-cysteine 341. Histidine 320 serves as a coordination point for Zn(2+). The active site involves glutamate 321. Residues histidine 324 and histidine 330 each coordinate Zn(2+). A propeptide spanning residues 379–404 is cleaved from the precursor; sequence SLKTDTVSTSVSGNEPLDDNVDGFHA. Positions 385–404 are disordered; sequence VSTSVSGNEPLDDNVDGFHA. Acidic residues predominate over residues 394-404; the sequence is PLDDNVDGFHA.

In terms of assembly, monomer. Zn(2+) serves as cofactor. As to expression, expressed by the venom gland.

The protein resides in the secreted. This probable venom zinc protease is not hemorrhagic when 3 ug are injected onto the back skin of guinea pig. In Deinagkistrodon acutus (Hundred-pace snake), this protein is Snake venom metalloproteinase H5.